A 299-amino-acid chain; its full sequence is ATP synthase gamma chain (299 aa).

The protein belongs to the ATPase gamma chain family. F-type ATPases have 2 components, CF(1) - the catalytic core - and CF(0) - the membrane proton channel. CF(1) has five subunits: alpha(3), beta(3), gamma(1), delta(1), epsilon(1). CF(0) has three main subunits: a, b and c.

Its subcellular location is the cell membrane. In terms of biological role, produces ATP from ADP in the presence of a proton gradient across the membrane. The gamma chain is believed to be important in regulating ATPase activity and the flow of protons through the CF(0) complex. The chain is ATP synthase gamma chain from Clavibacter sepedonicus (Clavibacter michiganensis subsp. sepedonicus).